The primary structure comprises 248 residues: uncharacterized protein (248 aa).

Residues 30-50 (LIALAIFIGLIAIFMFGCKAA) traverse the membrane as a helical segment. Disordered regions lie at residues 59–91 (NRDT…MDPP) and 208–248 (TTES…VSTR). Composition is skewed to polar residues over residues 210–220 (ESPAPAQSTSN) and 239–248 (SLHNETVSTR).

The protein resides in the membrane. This is an uncharacterized protein from Caenorhabditis elegans.